The sequence spans 302 residues: Coenzyme PQQ synthesis protein B (302 aa).

The protein belongs to the PqqB family.

Its pathway is cofactor biosynthesis; pyrroloquinoline quinone biosynthesis. Its function is as follows. May be involved in the transport of PQQ or its precursor to the periplasm. The protein is Coenzyme PQQ synthesis protein B of Azotobacter vinelandii (strain DJ / ATCC BAA-1303).